An 848-amino-acid polypeptide reads, in one-letter code: Translation initiation factor IF-2 (848 aa).

Positions 1–265 (MSDTDGKKPL…GNQRAEKQVR (265 aa)) are disordered. Basic and acidic residues predominate over residues 89–162 (KAREVEEAAQ…AEIAKPKTEA (74 aa)). A compositionally biased stretch (low complexity) spans 163–179 (RPATPADRAAAEAAAVR). Basic and acidic residues predominate over residues 191-219 (RKTDRDRDTRGGGGDDRDSRNKGRDDSRR). In terms of domain architecture, tr-type G spans 346-514 (PRAPIITIMG…AIALQAEILE (169 aa)). The G1 stretch occupies residues 355–362 (GHVDHGKT). 355–362 (GHVDHGKT) serves as a coordination point for GTP. The tract at residues 380-384 (GITQH) is G2. Residues 402-405 (DTPG) are G3. GTP contacts are provided by residues 402-406 (DTPGH) and 456-459 (NKID). The G4 stretch occupies residues 456–459 (NKID). The G5 stretch occupies residues 492–494 (SAK).

It belongs to the TRAFAC class translation factor GTPase superfamily. Classic translation factor GTPase family. IF-2 subfamily.

It is found in the cytoplasm. In terms of biological role, one of the essential components for the initiation of protein synthesis. Protects formylmethionyl-tRNA from spontaneous hydrolysis and promotes its binding to the 30S ribosomal subunits. Also involved in the hydrolysis of GTP during the formation of the 70S ribosomal complex. The polypeptide is Translation initiation factor IF-2 (Paracoccus denitrificans (strain Pd 1222)).